The sequence spans 577 residues: MESYTLSTSSISYAKPLSPLLLTAEQPSFILRNITLTSHPSQILAIIGPSGAGKSTLLDILAARTSPTSGSILLNSVLINPSSYRKISSYVPQHDTFFPLLTVSETFTFSASLLLPKNLSKVSSVVASLLKELNLTHLAHTRLGQGLSGGERRRVSIGLSLLHDPEVLLLDEPTSGLDSKSAFDVVQILKSIATSRERIVILSIHQPSFKILSLIDRVLLLSKGTIVYHGRLDLLEAFLLSKGFTVPSQLNSLEYAMEILQNIRDPYENANIALPDHCPESKKQNQKQSIVRYKSSRITEISLLSSRFWKIIYRTRQLLLTNILESLVVGLVLGTIYLNIGTGKEGIRKRFGLFAFTLTFLLSSTTQTLPIFIDERPILLRETSSGLYRLSSHILANTLVFLPYLLLIAIIYSVSLYFLVGLCFSWQALAYFVLVIWIIVLMANSFVLFLSSLAPNYIAGTSSVTILLAAFFLFSGYFISKESLPKYWLFMYFFSMYKYALDALLINEYSCLHNKCLVWFEEASVNSCLVTGGDVLDKNGLHERQRWFNVYMLLGFFVLYRVLCFLVLLKRVSGSKR.

Positions 6–248 constitute an ABC transporter domain; the sequence is LSTSSISYAK…LLSKGFTVPS (243 aa). Residue 48–55 participates in ATP binding; sequence GPSGAGKS. Residues 299–509 form the ABC transmembrane type-2 domain; that stretch reads TEISLLSSRF…ALDALLINEY (211 aa). 7 consecutive transmembrane segments (helical) span residues 318-338, 353-373, 400-420, 429-449, 458-478, 487-507, and 548-568; these read LLLT…TIYL, LFAF…PIFI, VFLP…YFLV, LAYF…FVLF, IAGT…SGYF, YWLF…LLIN, and FNVY…FLVL.

This sequence belongs to the ABC transporter superfamily. ABCG family. Eye pigment precursor importer (TC 3.A.1.204) subfamily.

The protein resides in the membrane. In Arabidopsis thaliana (Mouse-ear cress), this protein is ABC transporter G family member 4 (ABCG4).